We begin with the raw amino-acid sequence, 764 residues long: 5-methyltetrahydropteroyltriglutamate--homocysteine methyltransferase (764 aa).

5-methyltetrahydropteroyltri-L-glutamate contacts are provided by residues Arg-16 to Lys-19 and Lys-117. L-homocysteine contacts are provided by residues Ile-442–Ser-444 and Glu-495. Residues Ile-442–Ser-444 and Glu-495 each bind L-methionine. 5-methyltetrahydropteroyltri-L-glutamate-binding positions include Arg-526–Cys-527 and Trp-572. Asp-610 lines the L-homocysteine pocket. Asp-610 lines the L-methionine pocket. Glu-616 is a 5-methyltetrahydropteroyltri-L-glutamate binding site. Zn(2+) contacts are provided by His-652, Cys-654, and Glu-676. The active-site Proton donor is His-705. Residue Cys-737 participates in Zn(2+) binding.

It belongs to the vitamin-B12 independent methionine synthase family. The cofactor is Zn(2+).

The catalysed reaction is 5-methyltetrahydropteroyltri-L-glutamate + L-homocysteine = tetrahydropteroyltri-L-glutamate + L-methionine. Its pathway is amino-acid biosynthesis; L-methionine biosynthesis via de novo pathway; L-methionine from L-homocysteine (MetE route): step 1/1. In terms of biological role, catalyzes the transfer of a methyl group from 5-methyltetrahydrofolate to homocysteine resulting in methionine formation. This Bordetella pertussis (strain Tohama I / ATCC BAA-589 / NCTC 13251) protein is 5-methyltetrahydropteroyltriglutamate--homocysteine methyltransferase.